The sequence spans 714 residues: Fatty acid oxidation complex subunit alpha (714 aa).

The enoyl-CoA hydratase stretch occupies residues 1–190; it reads MEMASAFTLN…KLGLVDDVVP (190 aa). The segment at 306–714 is 3-hydroxyacyl-CoA dehydrogenase; the sequence is APLNSVGILG…FWKTTATDLQ (409 aa).

It in the N-terminal section; belongs to the enoyl-CoA hydratase/isomerase family. This sequence in the central section; belongs to the 3-hydroxyacyl-CoA dehydrogenase family. Heterotetramer of two alpha chains (FadJ) and two beta chains (FadI).

Its subcellular location is the cytoplasm. The enzyme catalyses a (3S)-3-hydroxyacyl-CoA = a (2E)-enoyl-CoA + H2O. It carries out the reaction a 4-saturated-(3S)-3-hydroxyacyl-CoA = a (3E)-enoyl-CoA + H2O. It catalyses the reaction a (3S)-3-hydroxyacyl-CoA + NAD(+) = a 3-oxoacyl-CoA + NADH + H(+). The catalysed reaction is (3S)-3-hydroxybutanoyl-CoA = (3R)-3-hydroxybutanoyl-CoA. Its pathway is lipid metabolism; fatty acid beta-oxidation. Catalyzes the formation of a hydroxyacyl-CoA by addition of water on enoyl-CoA. Also exhibits 3-hydroxyacyl-CoA epimerase and 3-hydroxyacyl-CoA dehydrogenase activities. The chain is Fatty acid oxidation complex subunit alpha from Shigella boydii serotype 18 (strain CDC 3083-94 / BS512).